Reading from the N-terminus, the 1708-residue chain is Clathrin heavy chain 1 (1708 aa).

The interval 1-492 (MAAANAPIAM…VDNDLALKIY (492 aa)) is globular terminal domain. 7 WD40-like repeat regions span residues 25–67 (FVTF…RPIT), 68–113 (ADSA…MPEQ), 114–155 (VVFW…ANLA), 156–205 (NNQI…QALE), 206–270 (AHAA…PDFQ), 271–314 (DDFP…ISPD), and 315–343 (PIFLTAESSASGGFYAINRRGQVLHATVN). Positions 462-478 (ENWLAEDKLECSEELGD) are binding site for the uncoating ATPase, involved in lattice disassembly. The flexible linker stretch occupies residues 493 to 536 (IKARATPKVVAAFAERREFDKILIYSKQVGYTPDYLFLLQTILR). Positions 537–648 (TDPQGAVNFA…RALQHYTELP (112 aa)) are distal segment. Residues 537 to 1708 (TDPQGAVNFA…AYGMPPMGSY (1172 aa)) form a heavy chain arm region. CHCR repeat units follow at residues 551–697 (QMEG…QIVV), 700–842 (AKEY…PEDF), 847–986 (ILSV…QLID), 993–1138 (LPES…VSEA), 1142–1283 (FIRA…FRLA), 1288–1434 (LNII…DLIN), and 1437–1580 (LNVL…KECF). The segment at 653–1708 (VMVNTHAIEP…AYGMPPMGSY (1056 aa)) is proximal segment. The tract at residues 1227 to 1536 (AAKIIYAFIS…YIYKKAGRWK (310 aa)) is involved in binding clathrin light chain. Residues 1564-1708 (SEDLLVYFIE…AYGMPPMGSY (145 aa)) are trimerization.

Belongs to the clathrin heavy chain family. Clathrin triskelions, composed of 3 heavy chains and 3 light chains, are the basic subunits of the clathrin coat.

The protein localises to the cytoplasmic vesicle membrane. Its subcellular location is the membrane. The protein resides in the coated pit. Functionally, clathrin is the major protein of the polyhedral coat of coated pits and vesicles. This is Clathrin heavy chain 1 from Oryza sativa subsp. japonica (Rice).